The following is a 450-amino-acid chain: Phospho-2-dehydro-3-deoxyheptonate aldolase (450 aa).

A compositionally biased stretch (polar residues) spans 1-13; that stretch reads MTVNAKTSPSAGN. Residues 1-20 form a disordered region; it reads MTVNAKTSPSAGNTWRDLPA.

Belongs to the class-II DAHP synthase family. In terms of assembly, homodimer.

The catalysed reaction is D-erythrose 4-phosphate + phosphoenolpyruvate + H2O = 7-phospho-2-dehydro-3-deoxy-D-arabino-heptonate + phosphate. Its pathway is metabolic intermediate biosynthesis; chorismate biosynthesis; chorismate from D-erythrose 4-phosphate and phosphoenolpyruvate: step 1/7. The chain is Phospho-2-dehydro-3-deoxyheptonate aldolase (aroH) from Streptomyces coelicolor (strain ATCC BAA-471 / A3(2) / M145).